The primary structure comprises 110 residues: Snake venom vascular endothelial growth factor toxin (110 aa).

Glutamine 1 carries the post-translational modification Pyrrolidone carboxylic acid. 3 disulfide bridges follow: cysteine 14-cysteine 56, cysteine 45-cysteine 91, and cysteine 49-cysteine 93.

This sequence belongs to the PDGF/VEGF growth factor family. Snake venom VEGF subfamily. Homodimer; disulfide-linked. As to expression, expressed by the venom gland.

The protein localises to the secreted. In terms of biological role, snake venom VEGFs that may contribute to venom dispersion and prey subjugation by inducing vascular permeability and hypotension. This protein potently stimulates dermal human microvascular endothelial cell (dHMVEC) proliferation in a VEGFR-2 dependent manner. This stimulatory effect is correlated with activation of the MAPK Erk1/2 signaling pathway. It also appears to be a chemoattractant for migration of these cells and stimulates their radial migration in a collagen gel. In vivo, it induces angiogenesis in a Japanese quail assay. This pro-angiogenic effect may also be related to its interaction with VEGFR-2. In addition, it may induce an increase in capillary permeability after intradermal injection, as well as a drastic hypotensive effect after intravenous injection. The hypotension is mediated by nitric oxide (NO), which is produced by VEGF-activated endothelium NO synthase. The protein is Snake venom vascular endothelial growth factor toxin of Daboia palaestinae (Palestine viper).